Here is a 220-residue protein sequence, read N- to C-terminus: Putative cobalt transport protein CbiM (220 aa).

5 helical membrane-spanning segments follow: residues 6–26, 43–63, 74–94, 98–118, and 182–202; these read GFLP…IVVY, ALVA…FPSV, GLLV…IVLL, LLLA…MGII, and IFTL…AAVI.

It belongs to the CbiM family. Forms an energy-coupling factor (ECF) transporter complex composed of an ATP-binding protein (A component, CbiO), a transmembrane protein (T component, CbiQ) and 2 possible substrate-capture proteins (S components, CbiM and CbiN) of unknown stoichimetry.

It localises to the cell membrane. The protein operates within cofactor biosynthesis; adenosylcobalamin biosynthesis. In terms of biological role, part of the energy-coupling factor (ECF) transporter complex CbiMNOQ involved in cobalt import. The polypeptide is Putative cobalt transport protein CbiM (Haloquadratum walsbyi (strain DSM 16790 / HBSQ001)).